The chain runs to 110 residues: Light-harvesting complex-like protein OHP1, chloroplastic (110 aa).

The transit peptide at Met-1–Ala-41 directs the protein to the chloroplast. Over Ala-42–Arg-74 the chain is Stromal. A helical membrane pass occupies residues Ala-75–Leu-95. The Lumenal segment spans residues Glu-96–Leu-110.

The protein belongs to the ELIP/psbS family. As to quaternary structure, may bind chlorophyll and form dimers in the thylakoid membrane. Component of a high molecular weight complex containing OHP1, OHP2 and HCF244, and PSII core proteins D1/D2, HCF136 and HCF173. Interacts with HCF244. Forms a trimeric complex with OHP2 and HCF244 that mutually stabilizes each subunit. In terms of tissue distribution, mostly expressed in cotyledons and shoot apices.

Its subcellular location is the plastid. It localises to the chloroplast thylakoid membrane. In terms of biological role, may play a photoprotective role in the thylakoid membrane in response to light stress. Involved in photosystems I (PSI) and II (PSII) core proteins function. Forms a trimeric complex with OHP2 and HCF244 that is required to promote PSII core subunit assembly. The trimeric complex forms a transient PSII reaction center-like complex with PsbA, PsbD, PsbE, PsbF and PsbI subunits in thylakoids for early assembly of PSII as well as PSII repair. The trimeric complex is required for the recruitment of ribosomes to the psbA mRNA during PSII biogenesis and repair. Forms a heterodimer with OHP1 that binds chlorophylls and carotenoids, and that may function in the delivery of pigments to the PsbA subunit of PSII. This Arabidopsis thaliana (Mouse-ear cress) protein is Light-harvesting complex-like protein OHP1, chloroplastic.